The primary structure comprises 706 residues: D-(-)-3-hydroxybutyrate oligomer hydrolase (706 aa).

Residues 1–32 form the signal peptide; it reads MTTTSKNCLTLTSIAAAVAAVLVLSACGGGSA. The active-site Charge relay system is serine 311.

The protein belongs to the D-(-)-3-hydroxybutyrate oligomer hydrolase family.

The protein resides in the secreted. It carries out the reaction (3R)-hydroxybutanoate dimer + H2O = 2 (R)-3-hydroxybutanoate + H(+). It functions in the pathway lipid metabolism; butanoate metabolism. Its function is as follows. Participates in the degradation of poly-3-hydroxybutyrate (PHB). It works downstream of poly(3-hydroxybutyrate) depolymerase, hydrolyzing D(-)-3-hydroxybutyrate oligomers of various length (3HB-oligomers) into 3HB-monomers. The polypeptide is D-(-)-3-hydroxybutyrate oligomer hydrolase (Polaromonas sp. (strain JS666 / ATCC BAA-500)).